Reading from the N-terminus, the 89-residue chain is DNA-directed RNA polymerase subunit Rpo6 (89 aa).

It belongs to the archaeal Rpo6/eukaryotic RPB6 RNA polymerase subunit family. As to quaternary structure, part of the 13-subunit RNA polymerase complex.

The protein localises to the cytoplasm. The catalysed reaction is RNA(n) + a ribonucleoside 5'-triphosphate = RNA(n+1) + diphosphate. Its function is as follows. DNA-dependent RNA polymerase (RNAP) catalyzes the transcription of DNA into RNA using the four ribonucleoside triphosphates as substrates. Functionally, reconstitution experiments show this subunit is required for basic activity. The protein is DNA-directed RNA polymerase subunit Rpo6 of Sulfolobus acidocaldarius (strain ATCC 33909 / DSM 639 / JCM 8929 / NBRC 15157 / NCIMB 11770).